A 496-amino-acid chain; its full sequence is Maturase K (496 aa).

It belongs to the intron maturase 2 family. MatK subfamily.

Its subcellular location is the plastid. The protein localises to the chloroplast. Its function is as follows. Usually encoded in the trnK tRNA gene intron. Probably assists in splicing its own and other chloroplast group II introns. The chain is Maturase K from Paeonia cambessedesii (Majorcan peony).